The chain runs to 427 residues: Mitogen-activated protein kinase 8 (427 aa).

One can recognise a Protein kinase domain in the interval 26-321; that stretch reads YQNLKPIGSG…VDEALQHPYI (296 aa). ATP-binding positions include 32–40 and lysine 55; that span reads IGSGAQGIV. The residue at position 116 (cysteine 116) is an S-nitrosocysteine. The Proton acceptor role is filled by aspartate 151. The residue at position 183 (threonine 183) is a Phosphothreonine; by MAP2K7. The short motif at 183–185 is the TXY element; it reads TPY. Residue tyrosine 185 is modified to Phosphotyrosine; by MAP2K4. Residues methionine 301 and serine 377 each carry the phosphoserine modification. Residues 371–427 are disordered; it reads VIRGQPSPLGAAVINGSQHPSSSSSVNDVSSMSTDPTLASDTDSSLEAAAGPLGCCR. Over residues 387–403 the composition is skewed to low complexity; that stretch reads SQHPSSSSSVNDVSSMS. The segment covering 404-415 has biased composition (polar residues); it reads TDPTLASDTDSS.

It belongs to the protein kinase superfamily. CMGC Ser/Thr protein kinase family. MAP kinase subfamily. As to quaternary structure, forms a complex with MAPK8IP1 and ARHGEF28. Found in a complex with SH3RF1, RAC1, MAP3K11/MLK3, MAP2K7/MKK7 and MAPK8IP1/JIP1. Found in a complex with SH3RF1, RAC2, MAP3K7/TAK1, MAP2K7/MKK7, MAPK8IP1/JIP1 and MAPK9/JNK2. Binds to at least four scaffolding proteins, MAPK8IP1/JIP-1, MAPK8IP2/JIP-2, MAPK8IP3/JIP-3/JSAP1 and SPAG9/MAPK8IP4/JIP-4. These proteins also bind other components of the JNK signaling pathway. Interacts with TP53 and WWOX. Interacts with JAMP. Interacts with HSF1 (via D domain and preferentially with hyperphosphorylated form); this interaction occurs under both normal growth conditions and immediately upon heat shock. Interacts (phosphorylated form) with NFE2; the interaction phosphorylates NFE2 in undifferentiated cells. Interacts with NFATC4. Interacts with MECOM; regulates JNK signaling. Interacts with PIN1; this interaction mediates MAPK8 conformational changes leading to the binding of MAPK8 to its substrates. Interacts with GRIPAP1. Interacts with POU5F1; phosphorylates POU5F1 at 'Ser-355'. Interacts with STMN2, STMN3 and STMN4. Interacts with HSF4. The cofactor is Mg(2+). In terms of processing, dually phosphorylated on Thr-183 and Tyr-185 by MAP2K7 and MAP2K4, which activates the enzyme. Phosphorylated by TAOK2. May be phosphorylated at Thr-183 and Tyr-185 by MAP3K1/MEKK1. Phosphorylated form is more concentrated at synapses than none-phosphorylated.

It is found in the cytoplasm. It localises to the nucleus. Its subcellular location is the synapse. The catalysed reaction is L-seryl-[protein] + ATP = O-phospho-L-seryl-[protein] + ADP + H(+). The enzyme catalyses L-threonyl-[protein] + ATP = O-phospho-L-threonyl-[protein] + ADP + H(+). Activated by threonine and tyrosine phosphorylation by either of two dual specificity kinases, MAP2K4 and MAP2K7. MAP2K4 shows a strong preference for Tyr-185 while MAP2K7 phosphorylates Tyr-183 preferentially. Inhibited by dual specificity phosphatases, such as DUSP1. Inhibited by SERPINB3. Serine/threonine-protein kinase involved in various processes such as cell proliferation, differentiation, migration, transformation and programmed cell death. Extracellular stimuli such as pro-inflammatory cytokines or physical stress stimulate the stress-activated protein kinase/c-Jun N-terminal kinase (SAP/JNK) signaling pathway. In this cascade, two dual specificity kinases MAP2K4/MKK4 and MAP2K7/MKK7 phosphorylate and activate MAPK8/JNK1. In turn, MAPK8/JNK1 phosphorylates a number of transcription factors, primarily components of AP-1 such as JUN, JDP2 and ATF2 and thus regulates AP-1 transcriptional activity. Phosphorylates the replication licensing factor CDT1, inhibiting the interaction between CDT1 and the histone H4 acetylase HBO1 to replication origins. Loss of this interaction abrogates the acetylation required for replication initiation. Promotes stressed cell apoptosis by phosphorylating key regulatory factors including p53/TP53 and Yes-associates protein YAP1. In T-cells, MAPK8 and MAPK9 are required for polarized differentiation of T-helper cells into Th1 cells. Contributes to the survival of erythroid cells by phosphorylating the antagonist of cell death BAD upon EPO stimulation. Mediates starvation-induced BCL2 phosphorylation, BCL2 dissociation from BECN1, and thus activation of autophagy. Phosphorylates STMN2 and hence regulates microtubule dynamics, controlling neurite elongation in cortical neurons. In the developing brain, through its cytoplasmic activity on STMN2, negatively regulates the rate of exit from multipolar stage and of radial migration from the ventricular zone. Phosphorylates several other substrates including heat shock factor protein 4 (HSF4), the deacetylase SIRT1, ELK1, or the E3 ligase ITCH. Phosphorylates the CLOCK-BMAL1 heterodimer and plays a role in the regulation of the circadian clock. Phosphorylates the heat shock transcription factor HSF1, suppressing HSF1-induced transcriptional activity. Phosphorylates POU5F1, which results in the inhibition of POU5F1's transcriptional activity and enhances its proteasomal degradation. Phosphorylates JUND and this phosphorylation is inhibited in the presence of MEN1. In neurons, phosphorylates SYT4 which captures neuronal dense core vesicles at synapses. Phosphorylates EIF4ENIF1/4-ET in response to oxidative stress, promoting P-body assembly. Phosphorylates SIRT6 in response to oxidative stress, stimulating its mono-ADP-ribosyltransferase activity. Phosphorylates NLRP3, promoting assembly of the NLRP3 inflammasome. Phosphorylates ALKBH5 in response to reactive oxygen species (ROS), promoting ALKBH5 sumoylation and inactivation. Its function is as follows. JNK1 isoforms display different binding patterns: beta-1 preferentially binds to c-Jun, whereas alpha-1, alpha-2, and beta-2 have a similar low level of binding to both c-Jun or ATF2. However, there is no correlation between binding and phosphorylation, which is achieved at about the same efficiency by all isoforms. The polypeptide is Mitogen-activated protein kinase 8 (MAPK8) (Homo sapiens (Human)).